Consider the following 130-residue polypeptide: Small ribosomal subunit protein uS8A (130 aa).

The protein belongs to the universal ribosomal protein uS8 family. As to quaternary structure, component of the small ribosomal subunit (SSU). Mature yeast ribosomes consist of a small (40S) and a large (60S) subunit. The 40S small subunit contains 1 molecule of ribosomal RNA (18S rRNA) and at least 33 different proteins. The large 60S subunit contains 3 rRNA molecules (25S, 5.8S and 5S rRNA) and at least 46 different proteins.

It is found in the cytoplasm. It localises to the nucleus. Functionally, component of the ribosome, a large ribonucleoprotein complex responsible for the synthesis of proteins in the cell. The small ribosomal subunit (SSU) binds messenger RNAs (mRNAs) and translates the encoded message by selecting cognate aminoacyl-transfer RNA (tRNA) molecules. The large subunit (LSU) contains the ribosomal catalytic site termed the peptidyl transferase center (PTC), which catalyzes the formation of peptide bonds, thereby polymerizing the amino acids delivered by tRNAs into a polypeptide chain. The nascent polypeptides leave the ribosome through a tunnel in the LSU and interact with protein factors that function in enzymatic processing, targeting, and the membrane insertion of nascent chains at the exit of the ribosomal tunnel. In Schizosaccharomyces pombe (strain 972 / ATCC 24843) (Fission yeast), this protein is Small ribosomal subunit protein uS8A (rps2201).